A 216-amino-acid chain; its full sequence is GTP cyclohydrolase 1 (216 aa).

Zn(2+) contacts are provided by Cys108, His111, and Cys179.

Belongs to the GTP cyclohydrolase I family. Toroid-shaped homodecamer, composed of two pentamers of five dimers.

It carries out the reaction GTP + H2O = 7,8-dihydroneopterin 3'-triphosphate + formate + H(+). The protein operates within cofactor biosynthesis; 7,8-dihydroneopterin triphosphate biosynthesis; 7,8-dihydroneopterin triphosphate from GTP: step 1/1. The chain is GTP cyclohydrolase 1 from Shewanella sp. (strain MR-7).